Consider the following 227-residue polypeptide: PKHD-type hydroxylase Neut_0373 (227 aa).

Positions 78–179 (KIMPPFFNRY…RIACFMFIQS (102 aa)) constitute a Fe2OG dioxygenase domain. Positions 97, 99, and 160 each coordinate Fe cation. Position 170 (R170) interacts with 2-oxoglutarate.

Fe(2+) is required as a cofactor. It depends on L-ascorbate as a cofactor.

This is PKHD-type hydroxylase Neut_0373 from Nitrosomonas eutropha (strain DSM 101675 / C91 / Nm57).